Consider the following 174-residue polypeptide: Gamma-crystallin D (174 aa).

Beta/gamma crystallin 'Greek key' domains lie at 2 to 40 (GKITLYEDRGFQGRHYECSSDHPNLQPYLSRCNSARVDS) and 41 to 83 (GCWM…RLIP). The interval 84–87 (HSGS) is connecting peptide. 2 consecutive Beta/gamma crystallin 'Greek key' domains span residues 88-128 (HRIR…NVLE) and 129-171 (GSWV…RRVI).

The protein belongs to the beta/gamma-crystallin family. Monomer.

In terms of biological role, crystallins are the dominant structural components of the vertebrate eye lens. This chain is Gamma-crystallin D (CRYGD), found in Homo sapiens (Human).